Consider the following 774-residue polypeptide: Neprilysin-2 (774 aa).

Over Met-1–Ser-20 the chain is Cytoplasmic. The helical; Signal-anchor for type II membrane protein transmembrane segment at Leu-21–Gly-41 threads the bilayer. Residues Lys-42–Trp-774 lie on the Extracellular side of the membrane. The disordered stretch occupies residues Ser-50 to Asp-79. Residues Asp-60–Lys-74 are compositionally biased toward polar residues. The 692-residue stretch at Val-83–Trp-774 folds into the Peptidase M13 domain. Disulfide bonds link Cys-84-Cys-89, Cys-107-Cys-759, Cys-115-Cys-719, Cys-171-Cys-424, and Cys-646-Cys-771. N-linked (GlcNAc...) asparagine glycosylation is found at Asn-173, Asn-239, Asn-264, Asn-305, Asn-315, Asn-358, and Asn-554. His-609 provides a ligand contact to Zn(2+). Glu-610 is an active-site residue. His-613 serves as a coordination point for Zn(2+). N-linked (GlcNAc...) asparagine glycosylation occurs at Asn-653. Glu-671 contacts Zn(2+). The active-site Proton donor is the Asp-675.

The protein belongs to the peptidase M13 family. Zn(2+) serves as cofactor. In terms of processing, N-glycosylated. Post-translationally, the soluble form is probably produced by proteolytic cleavage. As to expression, detected in the stellate cells in the main segment and the bar-shaped cells in the initial segment of male and female Malpighian tubules (at protein level). Expressed in the spermatheca (at protein level). Expressed in the somatic cyst cells of the testes, with increased expression at the tail end of elongating cysts. Expressed in the ovaries with strong expression in the posterior polar cells and in border cells of stage 8, 9, and 10 follicles. In adults and third-instar larvae, expressed in the brain, ventral ganglion, and stellate cells. Also expressed in the foregut and the imaginal disks (eye, antennal and leg) of third-instar larvae. In stage 17 embryos, expressed in the tracheal system, foregut, hindgut and epidermis. Also expressed in the stellate cell progenitors of the caudal visceral mesoderm in embryos.

Its subcellular location is the cell membrane. It localises to the secreted. It carries out the reaction Preferential cleavage of polypeptides between hydrophobic residues, particularly with Phe or Tyr at P1'.. Functionally, metalloendoprotease which cleaves peptides such as tachykinin peptide TK-2 at the amino side of hydrophobic residues. Functions in female fertility, embryogenesis and memory formation. Required in females for normal patterns of egg laying, probably due to its function in sperm retention and preventing sperm displacement by rival ejaculates. Also required for normal patterns of hatching due to its important role in early embryonic development. Required in the dorsal paired medial neurons for the proper formation of middle-term memory. Also required in the mushroom body neurons where it functions redundantly with neprilysins Nep3 and Nep4 in normal long-term memory formation. This is Neprilysin-2 from Drosophila melanogaster (Fruit fly).